A 179-amino-acid chain; its full sequence is Large ribosomal subunit protein uL5 (179 aa).

The protein belongs to the universal ribosomal protein uL5 family. In terms of assembly, part of the 50S ribosomal subunit; part of the 5S rRNA/L5/L18/L25 subcomplex. Contacts the 5S rRNA and the P site tRNA. Forms a bridge to the 30S subunit in the 70S ribosome.

Functionally, this is one of the proteins that bind and probably mediate the attachment of the 5S RNA into the large ribosomal subunit, where it forms part of the central protuberance. In the 70S ribosome it contacts protein S13 of the 30S subunit (bridge B1b), connecting the 2 subunits; this bridge is implicated in subunit movement. Contacts the P site tRNA; the 5S rRNA and some of its associated proteins might help stabilize positioning of ribosome-bound tRNAs. The protein is Large ribosomal subunit protein uL5 of Paraburkholderia phymatum (strain DSM 17167 / CIP 108236 / LMG 21445 / STM815) (Burkholderia phymatum).